Reading from the N-terminus, the 640-residue chain is uncharacterized protein (640 aa).

14 helical membrane-spanning segments follow: residues glycine 8–phenylalanine 28, leucine 52–isoleucine 72, leucine 90–alanine 110, leucine 136–leucine 156, valine 179–tryptophan 199, proline 208–valine 228, tryptophan 241–alanine 261, glutamate 277–alanine 297, tyrosine 298–phenylalanine 318, threonine 352–valine 372, isoleucine 391–valine 411, alanine 446–valine 466, isoleucine 497–alanine 517, and glycine 619–alanine 639.

The protein belongs to the complex I subunit 4 family.

Its subcellular location is the cell membrane. This is an uncharacterized protein from Mycobacterium tuberculosis (strain CDC 1551 / Oshkosh).